Consider the following 256-residue polypeptide: Imidazole glycerol phosphate synthase subunit HisF (256 aa).

Active-site residues include D11 and D130.

This sequence belongs to the HisA/HisF family. As to quaternary structure, heterodimer of HisH and HisF.

It is found in the cytoplasm. The catalysed reaction is 5-[(5-phospho-1-deoxy-D-ribulos-1-ylimino)methylamino]-1-(5-phospho-beta-D-ribosyl)imidazole-4-carboxamide + L-glutamine = D-erythro-1-(imidazol-4-yl)glycerol 3-phosphate + 5-amino-1-(5-phospho-beta-D-ribosyl)imidazole-4-carboxamide + L-glutamate + H(+). It participates in amino-acid biosynthesis; L-histidine biosynthesis; L-histidine from 5-phospho-alpha-D-ribose 1-diphosphate: step 5/9. In terms of biological role, IGPS catalyzes the conversion of PRFAR and glutamine to IGP, AICAR and glutamate. The HisF subunit catalyzes the cyclization activity that produces IGP and AICAR from PRFAR using the ammonia provided by the HisH subunit. This Cupriavidus taiwanensis (strain DSM 17343 / BCRC 17206 / CCUG 44338 / CIP 107171 / LMG 19424 / R1) (Ralstonia taiwanensis (strain LMG 19424)) protein is Imidazole glycerol phosphate synthase subunit HisF.